A 322-amino-acid polypeptide reads, in one-letter code: MDGEELTEQETALYDRQIRVWGANAQRRLTKAHILVSGIKGTVAEFCKNIVLAGVGSVTLMDDRLANMEALNANFLIPPDENVYSGKTVAEICSDSLKDFNPMVRVSVEKGDLSMLGTDFFEQFDVVVIGYGSRATKKYVNEKCRKLKKRVAFYTVDCRDSCGEIFVDLQDYKYTKKKLEEMVECELNFPSFQEAISVPWKPIPRRTAKLYFAMRVIEVFEESEGRKHGECSLLDLARVLEIKKQLCEANSVSESHIPDILLERLITGTTEFPPVCAIVGGILAQEVIKAVSGKGDPLKNFFYYDGEDGKGVMEDISDSFTS.

An N-acetylmethionine modification is found at M1.

This sequence belongs to the ubiquitin-activating E1 family. Heterodimer of SAE1A or SAE1B and SAE2. The complex binds SUMO proteins via SAE2.

It is found in the nucleus. The protein operates within protein modification; protein sumoylation. Its function is as follows. The dimeric enzyme acts as an E1 ligase for SUMO1 and SUMO2. It mediates ATP-dependent activation of SUMO proteins and formation of a thioester with a conserved cysteine residue on SAE2. Functionally redundant with its paralog SAE1B. This Arabidopsis thaliana (Mouse-ear cress) protein is SUMO-activating enzyme subunit 1A (SAE1A).